The following is a 290-amino-acid chain: Prepilin leader peptidase/N-methyltransferase (290 aa).

Residues 13 to 33 form a helical membrane-spanning segment; sequence AFVLCTILLGLLVGSFLNVVV. Zn(2+) contacts are provided by Cys72, Cys75, Cys97, and Cys100. The next 5 helical transmembrane spans lie at 128–148, 158–178, 183–203, 228–248, and 261–276; these read FTWQ…MSLI, VLVL…LFAS, LFGA…FKLV, ILPL…VIML, and FGPY…LLWG.

Belongs to the peptidase A24 family. Zn(2+) is required as a cofactor.

It is found in the cell inner membrane. The catalysed reaction is Typically cleaves a -Gly-|-Phe- bond to release an N-terminal, basic peptide of 5-8 residues from type IV prepilin, and then N-methylates the new N-terminal amino group, the methyl donor being S-adenosyl-L-methionine.. Its function is as follows. Plays an essential role in type IV pili and type II pseudopili formation by proteolytically removing the leader sequence from substrate proteins and subsequently monomethylating the alpha-amino group of the newly exposed N-terminal phenylalanine. Substrates include proteins required for pilus biogenesis PilE, PilV, PilW, and PilX as well as some components of the type II general secretory apparatus GspG, GspH, GspI and GspJ. This is Prepilin leader peptidase/N-methyltransferase (pilD) from Pseudomonas aeruginosa (strain ATCC 15692 / DSM 22644 / CIP 104116 / JCM 14847 / LMG 12228 / 1C / PRS 101 / PAO1).